Consider the following 432-residue polypeptide: Glutamate-1-semialdehyde 2,1-aminomutase (432 aa).

Position 269 is an N6-(pyridoxal phosphate)lysine (lysine 269).

Belongs to the class-III pyridoxal-phosphate-dependent aminotransferase family. HemL subfamily. Homodimer. Pyridoxal 5'-phosphate serves as cofactor.

The protein resides in the cytoplasm. The catalysed reaction is (S)-4-amino-5-oxopentanoate = 5-aminolevulinate. It functions in the pathway porphyrin-containing compound metabolism; protoporphyrin-IX biosynthesis; 5-aminolevulinate from L-glutamyl-tRNA(Glu): step 2/2. This is Glutamate-1-semialdehyde 2,1-aminomutase from Desulforamulus reducens (strain ATCC BAA-1160 / DSM 100696 / MI-1) (Desulfotomaculum reducens).